A 506-amino-acid chain; its full sequence is ATP synthase subunit alpha, chloroplastic (506 aa).

ATP is bound at residue 170–177; it reads GDRQTGKT.

The protein belongs to the ATPase alpha/beta chains family. In terms of assembly, F-type ATPases have 2 components, CF(1) - the catalytic core - and CF(0) - the membrane proton channel. CF(1) has five subunits: alpha(3), beta(3), gamma(1), delta(1), epsilon(1). CF(0) has four main subunits: a, b, b' and c.

Its subcellular location is the plastid. It localises to the chloroplast thylakoid membrane. The catalysed reaction is ATP + H2O + 4 H(+)(in) = ADP + phosphate + 5 H(+)(out). Functionally, produces ATP from ADP in the presence of a proton gradient across the membrane. The alpha chain is a regulatory subunit. The chain is ATP synthase subunit alpha, chloroplastic from Euglena gracilis.